Reading from the N-terminus, the 249-residue chain is MGNIFLQLLAVVALCIAPARSDWLPGTATFYGGADGSGTMGGACGYGNLYDQGYGINNAALSTPLFNDGASCGQCYLIICDYSKAPDWCKLGKAITVTGTNYCPPNYDLPYGGWCNATRPHFDMSQPAWENIGIYNAGIIPILYQQVKCWRYGGVRFTINGFNYFELVLVTNMAGSGSIASMSVKGSCTGWIQMTRNWGANWQCLAGLAGQALSFNVTSTGGQTIVFDDAVPAGWSFGQTFSTYHQFDY.

A signal peptide spans 1–21; sequence MGNIFLQLLAVVALCIAPARS. Residues 41–154 form the Expansin-like EG45 domain; sequence GGACGYGNLY…QQVKCWRYGG (114 aa). Residues N116 and N216 are each glycosylated (N-linked (GlcNAc...) asparagine). The 80-residue stretch at 164-243 folds into the Expansin-like CBD domain; it reads YFELVLVTNM…GWSFGQTFST (80 aa).

The protein belongs to the expansin family. Expansin A subfamily.

The protein resides in the secreted. The protein localises to the cell wall. It is found in the membrane. Its function is as follows. May cause loosening and extension of plant cell walls by disrupting non-covalent bonding between cellulose microfibrils and matrix glucans. No enzymatic activity has been found. May be required for rapid internodal elongation in deepwater rice during submergence. The protein is Expansin-A19 (EXPA19) of Oryza sativa subsp. japonica (Rice).